The chain runs to 474 residues: Glutathione synthetase (474 aa).

At alanine 2 the chain carries N-acetylalanine. Arginine 125 contributes to the substrate binding site. Glutamate 144 serves as a coordination point for ATP. Mg(2+)-binding residues include glutamate 144 and asparagine 146. Residues 148-151 (VSAS), 214-216 (ERN), glutamine 220, and 267-270 (RDGY) each bind substrate. ATP-binding positions include lysine 305, 364–373 (KPQREGGGNN), tyrosine 375, and 398–401 (MEKI). Mg(2+) is bound at residue glutamate 368. Position 415 is a phosphoserine (serine 415). An ATP-binding site is contributed by glutamate 425. Arginine 450 serves as a coordination point for substrate. The ATP site is built by lysine 452 and aspartate 458. Substrate is bound at residue 461–462 (VA).

This sequence belongs to the eukaryotic GSH synthase family. Homodimer. Mg(2+) serves as cofactor.

The enzyme catalyses gamma-L-glutamyl-L-cysteine + glycine + ATP = glutathione + ADP + phosphate + H(+). It catalyses the reaction gamma-L-glutamyl-(2S)-2-aminobutanoate + glycine + ATP = ophthalmate + ADP + phosphate + H(+). Its pathway is sulfur metabolism; glutathione biosynthesis; glutathione from L-cysteine and L-glutamate: step 2/2. Functionally, catalyzes the production of glutathione from gamma-glutamylcysteine and glycine in an ATP-dependent manner. Glutathione (gamma-glutamylcysteinylglycine, GSH) is the most abundant intracellular thiol in living aerobic cells and is required for numerous processes including the protection of cells against oxidative damage, amino acid transport, the detoxification of foreign compounds, the maintenance of protein sulfhydryl groups in a reduced state and acts as a cofactor for a number of enzymes. Participates in ophthalmate biosynthesis in hepatocytes. This is Glutathione synthetase from Bos taurus (Bovine).